The sequence spans 496 residues: Pseudooxynicotine dehydrogenase (496 aa).

Positions 1-42 (MTKDGDEGSKSGVSRRKFLGSAAVGVATAGIASQLLTLSAPA) form a signal peptide, tat-type signal. 7 residues coordinate FAD: Ala69, Glu88, Arg96, Trp113, Val285, Ser461, and Ile471.

This sequence belongs to the flavin monoamine oxidase family. Homodimer. The cofactor is FAD. Post-translationally, predicted to be exported by the Tat system. The position of the signal peptide cleavage has not been experimentally proven.

The protein resides in the periplasm. The enzyme catalyses pseudooxynicotine + 2 Fe(III)-[cytochrome c] + H2O = 4-oxo-4-(pyridin-3-yl)butanal + methylamine + 2 Fe(II)-[cytochrome c] + 2 H(+). It functions in the pathway alkaloid degradation; nicotine degradation. Its activity is regulated as follows. Strongly inhibited by Na(2)MoO(4) and FeCl(3). Activity is nearly twice as high in the presence of Na(2)WO(4). Its function is as follows. Involved in nicotine degradation. Catalyzes the deamination of pseudooxynicotine to 3-succinoylsemialdehyde-pyridine. Functions as a dehydrogenase that uses the c-type cytochrome protein CycN as the physiological electron acceptor. O(2) is a poor electron acceptor. Pnao is oxidized by CycN 230 times faster than O(2) at equivalent oxidant concentrations. The protein is Pseudooxynicotine dehydrogenase of Pseudomonas putida (strain DSM 28022 / S16).